The following is a 790-amino-acid chain: MKFSEYWLREWVDPQLSSEALVQQITMAGLEVDAAERVAKPFSGIVVGEVLSVEPHPDADKLRVCKVSDGQEEFQVVCGAPNVAAGMKVPFAKIGAVLSGDFKIKKAKLRGVESQGMLCSEEELTLAEKSDGLMPLAADAPVGVDVRSYLKLDDNIIDVDLTPNRSDCLSILGMAREVAALNKIPFEAPEVKKTAAVIDDVFPVRVEAPEACPRYVGRVIKGVDLSAPTPQWMVEKLRRSGIRSIDAVVDVTNFVMIELGQPMHAFDLNELADGIVVRMPTPGEKLVLLDGQEITINPDTLVIADNEKPLALAGVMGGEHSGVSEKTKDIFLESAFFAPLHLAGKARSYGLHTDSSHRFERGVDYAHQARAIERATELLLEIVGGQPGPVTEICSKEHLPAKALVNLRHARVDELLGVHLDRTRVEEMLARLGLGVHKVAKDGWTFSAPTHRFDISIEVDLIEEVARLYGYNKLPVTEPMAPLGIKPLPESKVSLRRLKLHLVSRGYQEAITYTFVDQKVLSLLTPEEDTITLANPIASDMAAMRTTLWAGLLQTALYNQNRQQNRIRLFESGLRFLKRGGQIQQDPMLAGLIMGASMPEGWESKKRTVDFYDVKGDLESLLEIPGCNLSFRSAQHPALHPGQTAEVLKDGQPIGVLGALHPRIAKTLNLNGPLYLFELCLNSIADGQVPSFKGVSRFPEIRRDLAIVIDEQTPYADVALAIAQSAGEWRVHHELFDVYHGESVGADKKSLAISIVWRHPERTLRDEEITEAFDNVVKELGNRFGASLRS.

The 109-residue stretch at 39–147 folds into the tRNA-binding domain; it reads AKPFSGIVVG…ADAPVGVDVR (109 aa). The B5 domain maps to 400–476; the sequence is PAKALVNLRH…RLYGYNKLPV (77 aa). Positions 454, 460, 463, and 464 each coordinate Mg(2+). An FDX-ACB domain is found at 696 to 789; the sequence is SRFPEIRRDL…LGNRFGASLR (94 aa).

This sequence belongs to the phenylalanyl-tRNA synthetase beta subunit family. Type 1 subfamily. Tetramer of two alpha and two beta subunits. Requires Mg(2+) as cofactor.

The protein resides in the cytoplasm. It carries out the reaction tRNA(Phe) + L-phenylalanine + ATP = L-phenylalanyl-tRNA(Phe) + AMP + diphosphate + H(+). The protein is Phenylalanine--tRNA ligase beta subunit of Hahella chejuensis (strain KCTC 2396).